The primary structure comprises 331 residues: Cytosolic sulfotransferase 8 (331 aa).

Residues 1–11 (MGEKDIPRNLK) are compositionally biased toward basic and acidic residues. A disordered region spans residues 1-31 (MGEKDIPRNLKEEEEEEEENQSEETKSLISS). Residues 12–22 (EEEEEEEENQS) show a composition bias toward acidic residues. 80–85 (KSGTTW) contacts 3'-phosphoadenylyl sulfate. The Proton acceptor role is filled by His145. 3'-phosphoadenylyl sulfate-binding positions include Arg167, Ser175, Tyr231, and 297-299 (RKG).

Belongs to the sulfotransferase 1 family. Expressed in seedlings and roots.

It is found in the cytoplasm. Functionally, sulfotransferase that utilizes 3'-phospho-5'-adenylyl sulfate (PAPS) as sulfonate donor. No activity with brassinosteroids. In Arabidopsis thaliana (Mouse-ear cress), this protein is Cytosolic sulfotransferase 8 (SOT8).